Consider the following 479-residue polypeptide: Pup--protein ligase (479 aa).

Glutamate 17 contacts Mg(2+). An ATP-binding site is contributed by arginine 62. Tyrosine 64 provides a ligand contact to Mg(2+). Aspartate 66 acts as the Proton acceptor in catalysis. Position 72 (glutamate 72) interacts with Mg(2+). Residues serine 75 and tryptophan 432 each contribute to the ATP site.

The protein belongs to the Pup ligase/Pup deamidase family. Pup-conjugating enzyme subfamily.

It catalyses the reaction ATP + [prokaryotic ubiquitin-like protein]-L-glutamate + [protein]-L-lysine = ADP + phosphate + N(6)-([prokaryotic ubiquitin-like protein]-gamma-L-glutamyl)-[protein]-L-lysine.. The protein operates within protein degradation; proteasomal Pup-dependent pathway. Its pathway is protein modification; protein pupylation. Catalyzes the covalent attachment of the prokaryotic ubiquitin-like protein modifier Pup to the proteasomal substrate proteins, thereby targeting them for proteasomal degradation. This tagging system is termed pupylation. The ligation reaction involves the side-chain carboxylate of the C-terminal glutamate of Pup and the side-chain amino group of a substrate lysine. The protein is Pup--protein ligase of Corynebacterium diphtheriae (strain ATCC 700971 / NCTC 13129 / Biotype gravis).